A 277-amino-acid polypeptide reads, in one-letter code: Nuclear egress protein 2 (277 aa).

Topologically, residues 1–250 (MEVIPNINSR…ASGECVTTIR (250 aa)) are perinuclear space. A helical transmembrane segment spans residues 251–271 (IPRYIVMLWIFSVLLAMVTWG). Topologically, residues 272-277 (SYRLYS) are nuclear.

The protein belongs to the herpesviridae NEC2 protein family. Forms a heterohexameric complex with NEC1. Post-translationally, phosphorylated.

It is found in the host nucleus inner membrane. Its function is as follows. Plays an essential role in virion nuclear egress, the first step of virion release from infected cell. Within the host nucleus, NEC1 interacts with the newly formed capsid through the vertexes and directs it to the inner nuclear membrane by associating with NEC2. Induces the budding of the capsid at the inner nuclear membrane as well as its envelopment into the perinuclear space. There, the NEC1/NEC2 complex promotes the fusion of the enveloped capsid with the outer nuclear membrane and the subsequent release of the viral capsid into the cytoplasm where it will reach the secondary budding sites in the host Golgi or trans-Golgi network. This chain is Nuclear egress protein 2, found in Gallid herpesvirus 2 (strain Chicken/Md5/ATCC VR-987) (GaHV-2).